Here is a 575-residue protein sequence, read N- to C-terminus: 2-isopropylmalate synthase (575 aa).

Residues 40–314 (PRWCAVDLRD…DPQIDFSDID (275 aa)) enclose the Pyruvate carboxyltransferase domain. Residues aspartate 49, histidine 253, histidine 255, and asparagine 289 each coordinate Mg(2+). Residues 456 to 575 (SGSGTPEWGR…IVSAVNRALR (120 aa)) form a regulatory domain region.

The protein belongs to the alpha-IPM synthase/homocitrate synthase family. LeuA type 2 subfamily. Homodimer. Mg(2+) is required as a cofactor.

The protein localises to the cytoplasm. It carries out the reaction 3-methyl-2-oxobutanoate + acetyl-CoA + H2O = (2S)-2-isopropylmalate + CoA + H(+). The protein operates within amino-acid biosynthesis; L-leucine biosynthesis; L-leucine from 3-methyl-2-oxobutanoate: step 1/4. Catalyzes the condensation of the acetyl group of acetyl-CoA with 3-methyl-2-oxobutanoate (2-ketoisovalerate) to form 3-carboxy-3-hydroxy-4-methylpentanoate (2-isopropylmalate). The protein is 2-isopropylmalate synthase of Kineococcus radiotolerans (strain ATCC BAA-149 / DSM 14245 / SRS30216).